Reading from the N-terminus, the 306-residue chain is Homoserine kinase (306 aa).

90 to 100 (PLARGLGSSAS) provides a ligand contact to ATP.

The protein belongs to the GHMP kinase family. Homoserine kinase subfamily.

Its subcellular location is the cytoplasm. The enzyme catalyses L-homoserine + ATP = O-phospho-L-homoserine + ADP + H(+). It participates in amino-acid biosynthesis; L-threonine biosynthesis; L-threonine from L-aspartate: step 4/5. Catalyzes the ATP-dependent phosphorylation of L-homoserine to L-homoserine phosphate. This chain is Homoserine kinase, found in Staphylococcus epidermidis (strain ATCC 12228 / FDA PCI 1200).